We begin with the raw amino-acid sequence, 918 residues long: DNA repair and recombination protein RAD54B (918 aa).

Polar residues predominate over residues 1–11 (MRRSAAPSQVL). Residues 1–29 (MRRSAAPSQVLGNVAKKPRFIPPGKSNAL) form a disordered region. Residues 320–487 (GMRVSGRFGA…YALIEFVNPG (168 aa)) form the Helicase ATP-binding domain. ATP is bound at residue 333–340 (DEMGLGKT). The DEGH box motif lies at 438-441 (DEGH). Positions 653–817 (VLVKLLAAIR…HIHFSVEELR (165 aa)) constitute a Helicase C-terminal domain. Positions 842-873 (KDHQNPSSKKPSVSRCCQLRQDQGKHNSKKPL) are disordered.

The protein belongs to the SNF2/RAD54 helicase family.

It localises to the nucleus. In terms of biological role, involved in DNA repair and mitotic recombination. The chain is DNA repair and recombination protein RAD54B (RAD54B) from Gallus gallus (Chicken).